Reading from the N-terminus, the 38-residue chain is Cytochrome b6-f complex subunit 5 (38 aa).

A helical transmembrane segment spans residues 5–25; sequence LVLGIVLGLIPITLAGLFVAA.

The protein belongs to the PetG family. The 4 large subunits of the cytochrome b6-f complex are cytochrome b6, subunit IV (17 kDa polypeptide, PetD), cytochrome f and the Rieske protein, while the 4 small subunits are PetG, PetL, PetM and PetN. The complex functions as a dimer.

The protein localises to the cellular thylakoid membrane. In terms of biological role, component of the cytochrome b6-f complex, which mediates electron transfer between photosystem II (PSII) and photosystem I (PSI), cyclic electron flow around PSI, and state transitions. PetG is required for either the stability or assembly of the cytochrome b6-f complex. This chain is Cytochrome b6-f complex subunit 5, found in Microcystis aeruginosa (strain NIES-843 / IAM M-2473).